Reading from the N-terminus, the 231-residue chain is 2-C-methyl-D-erythritol 4-phosphate cytidylyltransferase (231 aa).

This sequence belongs to the IspD/TarI cytidylyltransferase family. IspD subfamily.

It catalyses the reaction 2-C-methyl-D-erythritol 4-phosphate + CTP + H(+) = 4-CDP-2-C-methyl-D-erythritol + diphosphate. It functions in the pathway isoprenoid biosynthesis; isopentenyl diphosphate biosynthesis via DXP pathway; isopentenyl diphosphate from 1-deoxy-D-xylulose 5-phosphate: step 2/6. Its function is as follows. Catalyzes the formation of 4-diphosphocytidyl-2-C-methyl-D-erythritol from CTP and 2-C-methyl-D-erythritol 4-phosphate (MEP). The protein is 2-C-methyl-D-erythritol 4-phosphate cytidylyltransferase of Pseudoalteromonas atlantica (strain T6c / ATCC BAA-1087).